A 268-amino-acid chain; its full sequence is Ubiquinone biosynthesis protein COQ4 homolog, mitochondrial (268 aa).

The N-terminal 25 residues, 1 to 25 (MMQRCLRLQKPLALRRGLHLAQVNS), are a transit peptide targeting the mitochondrion. The Zn(2+) site is built by His-171, Asp-172, His-175, and Glu-187.

It belongs to the COQ4 family. In terms of assembly, component of a multi-subunit COQ enzyme complex. Zn(2+) serves as cofactor.

Its subcellular location is the mitochondrion inner membrane. The catalysed reaction is a 4-hydroxy-3-methoxy-5-(all-trans-polyprenyl)benzoate + H(+) = a 2-methoxy-6-(all-trans-polyprenyl)phenol + CO2. Its pathway is cofactor biosynthesis; ubiquinone biosynthesis. Functionally, lyase that catalyzes the C1-decarboxylation of 4-hydroxy-3-methoxy-5-(all-trans-polyprenyl)benzoic acid into 2-methoxy-6-(all-trans-polyprenyl)phenol during ubiquinone biosynthesis. The chain is Ubiquinone biosynthesis protein COQ4 homolog, mitochondrial from Drosophila simulans (Fruit fly).